We begin with the raw amino-acid sequence, 449 residues long: Tubulin beta chain (449 aa).

The GTP site is built by Gln-11, Glu-69, Ser-138, Gly-142, Thr-143, Gly-144, Asn-204, and Asn-226. Mg(2+) is bound at residue Glu-69.

The protein belongs to the tubulin family. Dimer of alpha and beta chains. A typical microtubule is a hollow water-filled tube with an outer diameter of 25 nm and an inner diameter of 15 nM. Alpha-beta heterodimers associate head-to-tail to form protofilaments running lengthwise along the microtubule wall with the beta-tubulin subunit facing the microtubule plus end conferring a structural polarity. Microtubules usually have 13 protofilaments but different protofilament numbers can be found in some organisms and specialized cells. Mg(2+) is required as a cofactor.

Its subcellular location is the cytoplasm. It is found in the cytoskeleton. Its function is as follows. Tubulin is the major constituent of microtubules, a cylinder consisting of laterally associated linear protofilaments composed of alpha- and beta-tubulin heterodimers. Microtubules grow by the addition of GTP-tubulin dimers to the microtubule end, where a stabilizing cap forms. Below the cap, tubulin dimers are in GDP-bound state, owing to GTPase activity of alpha-tubulin. This Candida albicans (Yeast) protein is Tubulin beta chain (TUB2).